Here is a 243-residue protein sequence, read N- to C-terminus: Amphiregulin (243 aa).

The first 24 residues, 1-24 (MRTPSLSLALSVLSLLVLGSGHYA), serve as a signal peptide directing secretion. The propeptide occupies 25–96 (AGLELNGTSS…IVDDSVRVEQ (72 aa)). Asn-30 carries an N-linked (GlcNAc...) asparagine glycan. Residues 55–67 (STISEMPSGSELS) show a composition bias toward polar residues. Disordered stretches follow at residues 55–75 (STIS…DYSE) and 98–135 (IKPK…KKKN). Residues 98 to 113 (IKPKENKTEGEKSSEK) are compositionally biased toward basic and acidic residues. A glycan (N-linked (GlcNAc...) asparagine) is linked at Asn-103. The segment covering 114 to 135 (PKRKKKGGKGGKGRRNRKKKKN) has biased composition (basic residues). In terms of domain architecture, EGF-like spans 133 to 173 (KKNPCAAKFQNFCIHGECRYIENLEVVTCHCHQDYFGERCG). 3 disulfides stabilise this stretch: Cys-137-Cys-150, Cys-145-Cys-161, and Cys-163-Cys-172. Residues 190-213 (IALAAIIVFVSAVSVAAIGIITAV) form a helical membrane-spanning segment. N-linked (GlcNAc...) asparagine glycosylation occurs at Asn-236.

The protein belongs to the amphiregulin family. The immature precursor interacts with CNIH.

It localises to the membrane. In terms of biological role, ligand of the EGF receptor/EGFR. Autocrine growth factor as well as a mitogen for a broad range of target cells including astrocytes, Schwann cells and fibroblasts. The chain is Amphiregulin (Areg) from Rattus norvegicus (Rat).